The following is a 219-amino-acid chain: Triosephosphate isomerase (219 aa).

6-8 contacts substrate; sequence NYK. Residue histidine 90 is the Electrophile of the active site. Residue glutamate 138 is the Proton acceptor of the active site. Substrate-binding positions include isoleucine 143, glycine 178, and 199 to 200; that span reads AS.

It belongs to the triosephosphate isomerase family. As to quaternary structure, homotetramer; dimer of dimers.

The protein resides in the cytoplasm. It catalyses the reaction D-glyceraldehyde 3-phosphate = dihydroxyacetone phosphate. The protein operates within carbohydrate biosynthesis; gluconeogenesis. It functions in the pathway carbohydrate degradation; glycolysis; D-glyceraldehyde 3-phosphate from glycerone phosphate: step 1/1. Functionally, involved in the gluconeogenesis. Catalyzes stereospecifically the conversion of dihydroxyacetone phosphate (DHAP) to D-glyceraldehyde-3-phosphate (G3P). The protein is Triosephosphate isomerase of Methanocaldococcus jannaschii (strain ATCC 43067 / DSM 2661 / JAL-1 / JCM 10045 / NBRC 100440) (Methanococcus jannaschii).